The following is a 180-amino-acid chain: uncharacterized protein (180 aa).

Positions 114–136 (DKISESDSLPDEYKEYVVKHDSD) are enriched in basic and acidic residues. The disordered stretch occupies residues 114–180 (DKISESDSLP…NFDNPDDNPK (67 aa)). The span at 137-146 (NSDNDSDNSD) shows a compositional bias: acidic residues. A compositionally biased stretch (low complexity) spans 147 to 173 (NDSNNSDNDSNNSDSDSDNSNDPNNFD).

This is an uncharacterized protein from Acanthamoeba polyphaga (Amoeba).